We begin with the raw amino-acid sequence, 602 residues long: Elongation factor 4 (602 aa).

A tr-type G domain is found at 7-189; that stretch reads RKIRNFSIIA…AIVKNIPPPT (183 aa). GTP contacts are provided by residues 19 to 24 and 136 to 139; these read DHGKST and NKID.

The protein belongs to the TRAFAC class translation factor GTPase superfamily. Classic translation factor GTPase family. LepA subfamily.

It is found in the cell membrane. It carries out the reaction GTP + H2O = GDP + phosphate + H(+). Functionally, required for accurate and efficient protein synthesis under certain stress conditions. May act as a fidelity factor of the translation reaction, by catalyzing a one-codon backward translocation of tRNAs on improperly translocated ribosomes. Back-translocation proceeds from a post-translocation (POST) complex to a pre-translocation (PRE) complex, thus giving elongation factor G a second chance to translocate the tRNAs correctly. Binds to ribosomes in a GTP-dependent manner. In Alkaliphilus metalliredigens (strain QYMF), this protein is Elongation factor 4.